Here is a 368-residue protein sequence, read N- to C-terminus: MMFLRLREEIARNLRNSGVRAVSPYKVGIGWIDLAIPRKRIGIDILDGSYESCAERLSSHPFRDVIIVDSVEEFCKEFGIPAPELNDEELEAPSAYVKAIEDALAYLYITGEVYEKEIDYRPLNSTLPDLKRFGYAVSYSKPKLNPQMFVCLTHDGYTAAKKVVLRRVELFEKRLRKLSTPENYIIALGMSAGLKVFKTADLEDYDLKSLLSFMRKLSEERFAVDEALHPKTALCRFLVDTALNGKAVKLAQTLSKLGLAFKVKKYSPFGHYLGEEYRIAREAVEALMKFSFAEIPRDYLREFMALTYPLSHSDIYPILSYSGDFLRKAEESGVCRLEGSKITLSEKFVDYAKVRLAMLIEKITEDLP.

This is an uncharacterized protein from Archaeoglobus fulgidus (strain ATCC 49558 / DSM 4304 / JCM 9628 / NBRC 100126 / VC-16).